The primary structure comprises 315 residues: Protoheme IX farnesyltransferase 1 (315 aa).

A run of 9 helical transmembrane segments spans residues 25–45, 49–69, 87–107, 120–139, 145–165, 176–196, 220–240, 242–262, and 280–300; these read PGII…AAKG, LALM…GCAV, RVTV…LALG, ALAL…VYSL, SVYG…VGYC, AILL…IAIF, LHIV…PLAG, TGIA…AMAL, and GFSI…SQVI.

It belongs to the UbiA prenyltransferase family. Protoheme IX farnesyltransferase subfamily.

It is found in the cell inner membrane. The enzyme catalyses heme b + (2E,6E)-farnesyl diphosphate + H2O = Fe(II)-heme o + diphosphate. The protein operates within porphyrin-containing compound metabolism; heme O biosynthesis; heme O from protoheme: step 1/1. Functionally, converts heme B (protoheme IX) to heme O by substitution of the vinyl group on carbon 2 of heme B porphyrin ring with a hydroxyethyl farnesyl side group. This chain is Protoheme IX farnesyltransferase 1, found in Shewanella sp. (strain W3-18-1).